The chain runs to 97 residues: Co-chaperonin GroES (97 aa).

It belongs to the GroES chaperonin family. In terms of assembly, heptamer of 7 subunits arranged in a ring. Interacts with the chaperonin GroEL.

The protein localises to the cytoplasm. Functionally, together with the chaperonin GroEL, plays an essential role in assisting protein folding. The GroEL-GroES system forms a nano-cage that allows encapsulation of the non-native substrate proteins and provides a physical environment optimized to promote and accelerate protein folding. GroES binds to the apical surface of the GroEL ring, thereby capping the opening of the GroEL channel. In Klebsiella pneumoniae subsp. pneumoniae (strain ATCC 700721 / MGH 78578), this protein is Co-chaperonin GroES.